Here is a 192-residue protein sequence, read N- to C-terminus: Thioredoxin-like 3-2, chloroplastic (192 aa).

The N-terminal 55 residues, 1-55 (MSEIVNLSSSLRSLNPKISPLVPPYRQTSSSFSRPRNFKYHSFTDKICLAAERIR), are a transit peptide targeting the chloroplast. The 126-residue stretch at 66–191 (LQELDDSPVS…VREMIENDSI (126 aa)) folds into the Thioredoxin domain. Active-site nucleophile residues include C110 and C113. An intrachain disulfide couples C110 to C113.

This sequence belongs to the thioredoxin family.

The protein localises to the plastid. Its subcellular location is the chloroplast stroma. Its function is as follows. Probable thiol-disulfide oxidoreductase that may participate in various redox reactions. The sequence is that of Thioredoxin-like 3-2, chloroplastic (WCRKC2) from Arabidopsis thaliana (Mouse-ear cress).